Consider the following 1247-residue polypeptide: ABC transporter B family member 14 (1247 aa).

The 290-residue stretch at 48 to 337 (MFLGGLGTCI…AVPSLSAISK (290 aa)) folds into the ABC transmembrane type-1 1 domain. Helical transmembrane passes span 49–69 (FLGG…FVFF), 95–115 (LYLV…VACW), 172–192 (HVLR…LSVW), 196–216 (LLTL…AIVM), 277–297 (LGVG…FWYA), and 315–335 (ILNV…LSAI). N362 and N392 each carry an N-linked (GlcNAc...) asparagine glycan. The ABC transporter 1 domain maps to 373-608 (IEFCGVSFAY…GGDYATLVNC (236 aa)). ATP is bound at residue 407 to 414 (GPSGSGKS). Positions 679-971 (EWLYALLGSI…TLALTPDIVK (293 aa)) constitute an ABC transmembrane type-1 2 domain. The next 2 membrane-spanning stretches (helical) occupy residues 680–700 (WLYA…PALF) and 727–747 (AIIF…QHYF). A glycan (N-linked (GlcNAc...) asparagine) is linked at N780. The next 3 helical transmembrane spans lie at 807 to 824 (IVQN…AFFY), 830 to 850 (AVVT…QLFL), and 915 to 935 (LSQC…SVLI). N-linked (GlcNAc...) asparagine glycosylation is present at N938. A helical transmembrane segment spans residues 949-969 (FMVLLVTAYSVAETLALTPDI). The 237-residue stretch at 1006–1242 (IEFRNVSFAY…SDGFYKKLTS (237 aa)) folds into the ABC transporter 2 domain. N-linked (GlcNAc...) asparagine glycosylation occurs at N1010. Position 1041–1048 (1041–1048 (GPSGSGKS)) interacts with ATP. A glycan (N-linked (GlcNAc...) asparagine) is linked at N1108.

This sequence belongs to the ABC transporter superfamily. ABCB family. Multidrug resistance exporter (TC 3.A.1.201) subfamily.

Its subcellular location is the membrane. This Arabidopsis thaliana (Mouse-ear cress) protein is ABC transporter B family member 14 (ABCB14).